A 410-amino-acid chain; its full sequence is MVLTARQQEELQLAVHAYLVEAGHAEAAAAMAKSANLGDDAGDAKYTGLLEKKWTTITRLQKRNMELQAEVEELRSSARAPRSRTTTKMEEWVPRPPATVAVDGHRLPITAVAIHPSFAVMASASEDASIKLWDMESGNFERSLKGHTNAVNDIAYDREGNRLVSCSTDMTIKVWNMDNFTCTKTLSGHDHTVSSVRFDHTGDRVFSASRDKTIKIWELATGYCLQTLQGHSDWVRSIDVSADGAWICSASSDHTVRVWSVASGECKHVWSDHEHVVEHASFAPLVAHEALNLMIFGSKPSAEAASKGPFVASASRDKSICLFDVSTGQHLARLTGHDNWVRATAWSRGGRYLFSVADDKTMRVWDIATKRVSKTIPAHNHFVSCIAVHAKNTHVVTGSVDLKVKVWECN.

The 33-residue stretch at 7–39 (QQEELQLAVHAYLVEAGHAEAAAAMAKSANLGD) folds into the LisH domain. A coiled-coil region spans residues 55–80 (TTITRLQKRNMELQAEVEELRSSARA). 7 WD repeats span residues 104-143 (GHRL…FERS), 146-185 (GHTN…CTKT), 188-227 (GHDH…CLQT), 230-269 (GHSD…CKHV), 294-333 (MIFG…HLAR), 336-375 (GHDN…VSKT), and 378-410 (AHNH…WECN).

This sequence belongs to the WD repeat LIS1/nudF family.

Its subcellular location is the cytoplasm. It is found in the cytoskeleton. It localises to the microtubule organizing center. The protein resides in the centrosome. Its function is as follows. Positively regulates the activity of the minus-end directed microtubule motor protein dynein. May enhance dynein-mediated microtubule sliding by targeting dynein to the microtubule plus end. Required for several dynein- and microtubule-dependent processes. The sequence is that of Lissencephaly-1 homolog from Monosiga brevicollis (Choanoflagellate).